A 496-amino-acid chain; its full sequence is 3-octaprenyl-4-hydroxybenzoate carboxy-lyase (496 aa).

Residue asparagine 181 coordinates Mn(2+). Prenylated FMN-binding positions include 184–186 (IYR), 198–200 (RWL), and 203–204 (RG). Mn(2+) is bound at residue glutamate 247. Aspartate 296 functions as the Proton donor in the catalytic mechanism.

The protein belongs to the UbiD family. In terms of assembly, homohexamer. The cofactor is prenylated FMN. Mn(2+) serves as cofactor.

The protein localises to the cell membrane. The enzyme catalyses a 4-hydroxy-3-(all-trans-polyprenyl)benzoate + H(+) = a 2-(all-trans-polyprenyl)phenol + CO2. Its pathway is cofactor biosynthesis; ubiquinone biosynthesis. In terms of biological role, catalyzes the decarboxylation of 3-octaprenyl-4-hydroxy benzoate to 2-octaprenylphenol, an intermediate step in ubiquinone biosynthesis. In Azoarcus sp. (strain BH72), this protein is 3-octaprenyl-4-hydroxybenzoate carboxy-lyase.